The primary structure comprises 464 residues: MHERTFHIMTFGCQMNVNDSDWLARALEARGFTQVPEHEAAIYIINTCSVRDKPEQKVYSLLGRIRRETKNRRNVTVCVGGCVAQQIGKGFFKRFSQVRLVFGTDGAASAPQAIERLVQEPHARISLLDFSEEFPERDAGWENGEVPVSAYVNIMQGCNNFCAYCIVPYTRGRQKSRSSAAVLDECRTLVGNGAREITLLGQNVNSYGLDPHGDGTTFARLLHDVAAIPGLERLRFMTPHPKDIAGEVIEAFGALKNLCPRVHLPLQSGSDRVLKAMGRKYDMARYMDIVTRLKAVRPDIQITSDLIVGFPGETEADFEQTLEAMRTVPFVQSFSFIYSDRPGTRAEMLPGKLSREEKTARLVRLQEVQNEYSEAALQAMVGKTVMVLFESPSPKSAAGSGTDAQNAAEESGRTASSWQGRDEHGFILNVHLPAPADLYGKIMPVTVTAARKHSLTGEPAGESC.

An MTTase N-terminal domain is found at 4-119 (RTFHIMTFGC…APQAIERLVQ (116 aa)). Residues C13, C48, C82, C158, C162, and C165 each contribute to the [4Fe-4S] cluster site. Residues 144 to 375 (GEVPVSAYVN…QEVQNEYSEA (232 aa)) form the Radical SAM core domain. The TRAM domain occupies 378 to 461 (QAMVGKTVMV…KHSLTGEPAG (84 aa)). The disordered stretch occupies residues 393–420 (SPKSAAGSGTDAQNAAEESGRTASSWQG).

Belongs to the methylthiotransferase family. MiaB subfamily. As to quaternary structure, monomer. [4Fe-4S] cluster serves as cofactor.

It is found in the cytoplasm. It catalyses the reaction N(6)-dimethylallyladenosine(37) in tRNA + (sulfur carrier)-SH + AH2 + 2 S-adenosyl-L-methionine = 2-methylsulfanyl-N(6)-dimethylallyladenosine(37) in tRNA + (sulfur carrier)-H + 5'-deoxyadenosine + L-methionine + A + S-adenosyl-L-homocysteine + 2 H(+). Its function is as follows. Catalyzes the methylthiolation of N6-(dimethylallyl)adenosine (i(6)A), leading to the formation of 2-methylthio-N6-(dimethylallyl)adenosine (ms(2)i(6)A) at position 37 in tRNAs that read codons beginning with uridine. In Oleidesulfovibrio alaskensis (strain ATCC BAA-1058 / DSM 17464 / G20) (Desulfovibrio alaskensis), this protein is tRNA-2-methylthio-N(6)-dimethylallyladenosine synthase.